Consider the following 303-residue polypeptide: Olfactory receptor 4X2 (303 aa).

Over 1-17 (MTEFIFLVLSPNQEVQR) the chain is Extracellular. Residues 18 to 41 (VCFVIFLFLYTAIVLGNFLIVLTV) form a helical membrane-spanning segment. At 42–49 (MTSRSLGS) the chain is on the cytoplasmic side. The helical transmembrane segment at 50–71 (PMYFFLSYLSFMEICYSSATAP) threads the bilayer. Residues 72-92 (KLISDLLAERKVISWWGCMAQ) lie on the Extracellular side of the membrane. A disulfide bridge connects residues C89 and C181. Residues 93–112 (LFFLHFFGGTEIFLLTVMAY) traverse the membrane as a helical segment. The Cytoplasmic segment spans residues 113 to 131 (DHYVAICKPLSYTTIMNWQ). The helical transmembrane segment at 132-150 (VCTVLVGIAWVGGFMHSFA) threads the bilayer. Topologically, residues 151 to 187 (QILLIFHLLFCGPNVINHYFCDLVPLLKLACSDTFLI) are extracellular. The chain crosses the membrane as a helical span at residues 188–211 (GLLIVANGGTLSVISFGVLLASYM). The Cytoplasmic segment spans residues 212-227 (VILLHLRTWSSEGWCK). The chain crosses the membrane as a helical span at residues 228 to 250 (ALSTCGSHFAVVILFFGPCVFNS). At 251-261 (LRPSTTLPIDK) the chain is on the extracellular side. The chain crosses the membrane as a helical span at residues 262 to 281 (MVAVFYTVITAILNPVIYSL). The Cytoplasmic portion of the chain corresponds to 282–303 (RNAEMRKAMKRLWIRTLRLNEK).

The protein belongs to the G-protein coupled receptor 1 family.

The protein resides in the cell membrane. Odorant receptor. This is Olfactory receptor 4X2 (OR4X2) from Homo sapiens (Human).